We begin with the raw amino-acid sequence, 388 residues long: Chorismate synthase (388 aa).

Residues arginine 39 and arginine 45 each contribute to the NADP(+) site. Residues 132–134 (RSS), 251–252 (NA), glycine 296, 311–315 (KPIPT), and arginine 337 each bind FMN.

The protein belongs to the chorismate synthase family. Homotetramer. It depends on FMNH2 as a cofactor.

It catalyses the reaction 5-O-(1-carboxyvinyl)-3-phosphoshikimate = chorismate + phosphate. The protein operates within metabolic intermediate biosynthesis; chorismate biosynthesis; chorismate from D-erythrose 4-phosphate and phosphoenolpyruvate: step 7/7. Catalyzes the anti-1,4-elimination of the C-3 phosphate and the C-6 proR hydrogen from 5-enolpyruvylshikimate-3-phosphate (EPSP) to yield chorismate, which is the branch point compound that serves as the starting substrate for the three terminal pathways of aromatic amino acid biosynthesis. This reaction introduces a second double bond into the aromatic ring system. This is Chorismate synthase from Staphylococcus aureus (strain MRSA252).